Consider the following 180-residue polypeptide: MKILGIDPGLRTTGFGVIEKHGNKLTYIASGTIKTPDADLPQRLKTILSSVSEVIATYHPDCAAIEKVFVNVNPQSTLLLGQARGAAICALVHADLLVAEYTALQVKQAVVGQGKAQKAQVQDMVQRLLKLSGLPGTDAADALGVAICHAHSGEALSVLGALAPELARKGLRVRGGRLVG.

Catalysis depends on residues aspartate 7, glutamate 66, and aspartate 138. The Mg(2+) site is built by aspartate 7, glutamate 66, and aspartate 138.

The protein belongs to the RuvC family. As to quaternary structure, homodimer which binds Holliday junction (HJ) DNA. The HJ becomes 2-fold symmetrical on binding to RuvC with unstacked arms; it has a different conformation from HJ DNA in complex with RuvA. In the full resolvosome a probable DNA-RuvA(4)-RuvB(12)-RuvC(2) complex forms which resolves the HJ. Mg(2+) is required as a cofactor.

The protein resides in the cytoplasm. It carries out the reaction Endonucleolytic cleavage at a junction such as a reciprocal single-stranded crossover between two homologous DNA duplexes (Holliday junction).. Functionally, the RuvA-RuvB-RuvC complex processes Holliday junction (HJ) DNA during genetic recombination and DNA repair. Endonuclease that resolves HJ intermediates. Cleaves cruciform DNA by making single-stranded nicks across the HJ at symmetrical positions within the homologous arms, yielding a 5'-phosphate and a 3'-hydroxyl group; requires a central core of homology in the junction. The consensus cleavage sequence is 5'-(A/T)TT(C/G)-3'. Cleavage occurs on the 3'-side of the TT dinucleotide at the point of strand exchange. HJ branch migration catalyzed by RuvA-RuvB allows RuvC to scan DNA until it finds its consensus sequence, where it cleaves and resolves the cruciform DNA. The polypeptide is Crossover junction endodeoxyribonuclease RuvC (Janthinobacterium sp. (strain Marseille) (Minibacterium massiliensis)).